Reading from the N-terminus, the 1469-residue chain is snRNA-activating protein complex subunit 4 (1469 aa).

Positions E16 to D82 are disordered. Positions G24–S36 are enriched in low complexity. Residues L37–P53 show a composition bias toward acidic residues. S68 is subject to Phosphoserine. The segment at E84–G133 is SNAPC5-binding. The region spanning E250–E288 is the Myb-like 1 domain. The HTH myb-type 1 domain maps to H289–A343. Residues W317–N341 constitute a DNA-binding region (H-T-H motif). Positions L344–L395 constitute a Myb-like 2 domain. HTH myb-type domains are found at residues D396–L451 and K452–Q503. 2 DNA-binding regions (H-T-H motif) span residues W424–L447 and W476–M499. Disordered regions lie at residues K501–A558, Q577–E661, R685–S710, A834–S894, P932–L981, P1001–T1051, A1121–A1167, and I1184–K1266. Residues Q503–V516 are compositionally biased toward basic residues. Low complexity predominate over residues S519–S541. Position 599 is a phosphoserine (S599). Residues K602–A618 are compositionally biased toward polar residues. Residue S626 is modified to Phosphoserine. Pro residues predominate over residues P932–G944. Over residues P951 to S968 the composition is skewed to low complexity. Over residues I1014–P1029 the composition is skewed to polar residues. Over residues E1039–T1051 the composition is skewed to pro residues. Position 1157 is a phosphothreonine (T1157). Over residues I1184–P1195 the composition is skewed to basic and acidic residues. S1224 carries the post-translational modification Phosphoserine. Residues A1281–P1393 are SNAPC2-binding. 3 positions are modified to phosphoserine: S1398, S1400, and S1440. The segment at A1430 to D1449 is disordered. Residues C1436–S1445 show a composition bias toward polar residues.

As to quaternary structure, part of the SNAPc complex composed of 5 subunits: SNAPC1, SNAPC2, SNAPC3, SNAPC4 and SNAPC5. SNAPC4 interacts with SNAPC1, SNAPC2, SNAPC5, BRF2 and TBP.

The protein resides in the nucleus. In terms of biological role, part of the SNAPc complex required for the transcription of both RNA polymerase II and III small-nuclear RNA genes. Binds to the proximal sequence element (PSE), a non-TATA-box basal promoter element common to these 2 types of genes. Recruits TBP and BRF2 to the U6 snRNA TATA box. This Homo sapiens (Human) protein is snRNA-activating protein complex subunit 4.